The primary structure comprises 100 residues: Urease subunit gamma (100 aa).

Belongs to the urease gamma subunit family. As to quaternary structure, heterotrimer of UreA (gamma), UreB (beta) and UreC (alpha) subunits. Three heterotrimers associate to form the active enzyme.

Its subcellular location is the cytoplasm. It catalyses the reaction urea + 2 H2O + H(+) = hydrogencarbonate + 2 NH4(+). Its pathway is nitrogen metabolism; urea degradation; CO(2) and NH(3) from urea (urease route): step 1/1. In Escherichia coli O157:H7 (strain EC4115 / EHEC), this protein is Urease subunit gamma.